Here is a 135-residue protein sequence, read N- to C-terminus: ATP synthase epsilon chain (135 aa).

Residues 101 to 122 (TAVTKLEGQPSTPEKVKAQQLF) are disordered.

Belongs to the ATPase epsilon chain family. In terms of assembly, F-type ATPases have 2 components, CF(1) - the catalytic core - and CF(0) - the membrane proton channel. CF(1) has five subunits: alpha(3), beta(3), gamma(1), delta(1), epsilon(1). CF(0) has three main subunits: a, b and c.

It localises to the cellular thylakoid membrane. Produces ATP from ADP in the presence of a proton gradient across the membrane. This Synechococcus sp. (strain CC9311) protein is ATP synthase epsilon chain.